The sequence spans 758 residues: Vitamin K-dependent gamma-carboxylase (758 aa).

Positions 1 to 21 (MAVSARSARTSPGSDKVQKDK) are disordered. A2 bears the N-acetylalanine mark. Topologically, residues 2-60 (AVSARSARTSPGSDKVQKDKAELISGPRQDSLMGKLLGFEWTDLSSWRRLVTLLNRPTD) are cytoplasmic. A helical membrane pass occupies residues 61-81 (PASLAVFRFLFGFLMVLDIPQ). The Lumenal segment spans residues 82–113 (ERGLSSLDRKYLDGLDVCRFPLLDALRPLPLD). C99 and C450 are joined by a disulfide. The chain crosses the membrane as a helical span at residues 114 to 134 (WMYLVYTIMFLGALGMMLGLC). Topologically, residues 135-136 (YR) are cytoplasmic. A helical membrane pass occupies residues 137–157 (ISCVLFLLPYWYVFLLDKTSW). Residues 158–292 (NNHSYLYGLL…VSYFHCMNSQ (135 aa)) lie on the Lumenal side of the membrane. Residues 293–313 (LFSIGMFSYVMLASSPLFCSP) form a helical membrane-spanning segment. Over 314–361 (EWPRKLVSYCPQRLQELLPLKAAPQPSVSCVYKRSRGKSGQKPGLRHQ) the chain is Cytoplasmic. The chain crosses the membrane as a helical span at residues 362-382 (LGAAFTLLYLLEQLFLPYSHF). Residues 383–758 (LTQGYNNWTN…SNPDPVHSEF (376 aa)) lie on the Lumenal side of the membrane. The interval 732–758 (GELSPSNMDSSHSNPPESNPDPVHSEF) is disordered. Positions 735-747 (SPSNMDSSHSNPP) are enriched in polar residues.

The protein belongs to the vitamin K-dependent gamma-carboxylase family. Monomer. May interact with CALU.

Its subcellular location is the endoplasmic reticulum membrane. The enzyme catalyses 4-carboxy-L-glutamyl-[protein] + 2,3-epoxyphylloquinone + H2O + H(+) = phylloquinol + L-glutamyl-[protein] + CO2 + O2. Functionally, mediates the vitamin K-dependent carboxylation of glutamate residues to calcium-binding gamma-carboxyglutamate (Gla) residues with the concomitant conversion of the reduced hydroquinone form of vitamin K to vitamin K epoxide. Catalyzes gamma-carboxylation of various proteins, such as blood coagulation factors (F2, F7, F9 and F10), osteocalcin (BGLAP) or matrix Gla protein (MGP). The sequence is that of Vitamin K-dependent gamma-carboxylase (GGCX) from Pongo abelii (Sumatran orangutan).